We begin with the raw amino-acid sequence, 304 residues long: MSGFVEKPEPVQVPGLTHLHTGKVRDLYRNEAGDLVMVASDRISAYDWVLPTEIPDKGRVLTRLSLWWFDQLADLVPNHVISTELPPGAPADWAGRTLICKSLRMVEVECVARGYLTGSGLVEYDATRTVCGIGLPEGLVNGSELPGPIFTPATKAAVGDHDENVSYEDIAREVGPETAAELRRTTLDVYRRARDIAHGRGIILADTKFEFGFETAEDGTERLIIADEVLTPDSSRFWPAATWEPGRAQPSYDKQFVRDWLTSPASGWDRASEQPPPALPPEIVAATRAKYIEAYEVLTGTNWA.

It belongs to the SAICAR synthetase family.

It catalyses the reaction 5-amino-1-(5-phospho-D-ribosyl)imidazole-4-carboxylate + L-aspartate + ATP = (2S)-2-[5-amino-1-(5-phospho-beta-D-ribosyl)imidazole-4-carboxamido]succinate + ADP + phosphate + 2 H(+). Its pathway is purine metabolism; IMP biosynthesis via de novo pathway; 5-amino-1-(5-phospho-D-ribosyl)imidazole-4-carboxamide from 5-amino-1-(5-phospho-D-ribosyl)imidazole-4-carboxylate: step 1/2. This chain is Phosphoribosylaminoimidazole-succinocarboxamide synthase, found in Streptomyces griseus subsp. griseus (strain JCM 4626 / CBS 651.72 / NBRC 13350 / KCC S-0626 / ISP 5235).